The sequence spans 1273 residues: Homeobox protein cut-like ceh-44 (1273 aa).

2 coiled-coil regions span residues 101–407 (LLKG…DGFK) and 440–468 (RQKNTDSELIEKIQEAKRNKAVCELKFED). 3 consecutive DNA-binding regions (CUT) follow at residues 591–681 (NVQA…LSPR), 832–919 (QAQY…KQPK), and 978–1065 (IDES…KEES). Positions 1069–1100 (VKAKIESVPAPREAPRPVKRKHSSDTDDYDLN) are disordered. The homeobox DNA-binding region spans 1103–1162 (KPIQRTVITDYQKDTLRFVFVNEQHPSNELCEQISLKLDMSLRTVQNWFHNHRTRSKARE).

Belongs to the CUT homeobox family.

It localises to the nucleus. Probable DNA-binding regulatory protein involved in cell-fate specification. This is Homeobox protein cut-like ceh-44 from Caenorhabditis elegans.